We begin with the raw amino-acid sequence, 190 residues long: Holliday junction branch migration complex subunit RuvA (190 aa).

The tract at residues Met1–Ala64 is domain I. The domain II stretch occupies residues Thr65–Gly137. The flexible linker stretch occupies residues Gly137–His141. The interval Ala142–Arg190 is domain III.

This sequence belongs to the RuvA family. In terms of assembly, homotetramer. Forms an RuvA(8)-RuvB(12)-Holliday junction (HJ) complex. HJ DNA is sandwiched between 2 RuvA tetramers; dsDNA enters through RuvA and exits via RuvB. An RuvB hexamer assembles on each DNA strand where it exits the tetramer. Each RuvB hexamer is contacted by two RuvA subunits (via domain III) on 2 adjacent RuvB subunits; this complex drives branch migration. In the full resolvosome a probable DNA-RuvA(4)-RuvB(12)-RuvC(2) complex forms which resolves the HJ.

Its subcellular location is the cytoplasm. In terms of biological role, the RuvA-RuvB-RuvC complex processes Holliday junction (HJ) DNA during genetic recombination and DNA repair, while the RuvA-RuvB complex plays an important role in the rescue of blocked DNA replication forks via replication fork reversal (RFR). RuvA specifically binds to HJ cruciform DNA, conferring on it an open structure. The RuvB hexamer acts as an ATP-dependent pump, pulling dsDNA into and through the RuvAB complex. HJ branch migration allows RuvC to scan DNA until it finds its consensus sequence, where it cleaves and resolves the cruciform DNA. The protein is Holliday junction branch migration complex subunit RuvA of Bordetella petrii (strain ATCC BAA-461 / DSM 12804 / CCUG 43448).